Consider the following 309-residue polypeptide: uncharacterized protein (309 aa).

Solcar repeat units lie at residues 6 to 83 (SDLY…LCHS), 97 to 211 (LTGY…FKRL), and 216 to 302 (NDKA…VSLL). 6 helical membrane-spanning segments follow: residues 12 to 32 (ITAG…FEYL), 47 to 67 (IILP…VAAF), 100 to 120 (YNLL…IIPF), 184 to 204 (VQGT…QFTA), 222 to 242 (VITG…IDVV), and 285 to 305 (VGIS…LLGF).

It belongs to the mitochondrial carrier (TC 2.A.29) family.

It is found in the mitochondrion inner membrane. This is an uncharacterized protein from Saccharomyces cerevisiae (strain ATCC 204508 / S288c) (Baker's yeast).